The following is a 268-amino-acid chain: 4-hydroxy-tetrahydrodipicolinate reductase (268 aa).

NAD(+) contacts are provided by residues 8–13 (GAAGRM) and aspartate 35. Arginine 36 lines the NADP(+) pocket. NAD(+) is bound by residues 99–101 (GTT) and 123–126 (AANF). Histidine 156 acts as the Proton donor/acceptor in catalysis. A (S)-2,3,4,5-tetrahydrodipicolinate-binding site is contributed by histidine 157. Catalysis depends on lysine 160, which acts as the Proton donor. 166 to 167 (GT) lines the (S)-2,3,4,5-tetrahydrodipicolinate pocket.

The protein belongs to the DapB family.

The protein resides in the cytoplasm. The enzyme catalyses (S)-2,3,4,5-tetrahydrodipicolinate + NAD(+) + H2O = (2S,4S)-4-hydroxy-2,3,4,5-tetrahydrodipicolinate + NADH + H(+). It carries out the reaction (S)-2,3,4,5-tetrahydrodipicolinate + NADP(+) + H2O = (2S,4S)-4-hydroxy-2,3,4,5-tetrahydrodipicolinate + NADPH + H(+). It participates in amino-acid biosynthesis; L-lysine biosynthesis via DAP pathway; (S)-tetrahydrodipicolinate from L-aspartate: step 4/4. Catalyzes the conversion of 4-hydroxy-tetrahydrodipicolinate (HTPA) to tetrahydrodipicolinate. The protein is 4-hydroxy-tetrahydrodipicolinate reductase of Pseudomonas aeruginosa (strain LESB58).